The following is a 6269-amino-acid chain: Nonribosomal peptide synthetase 1 (6269 aa).

An adenylation 1 region spans residues 249–781 (ENDWSRVCSF…VSGKLDRKSI (533 aa)). A Carrier 1 domain is found at 803–879 (RAANSTEDQL…ELATRVKGVT (77 aa)). S840 is subject to O-(pantetheine 4'-phosphoryl)serine. The epimerase 1 stretch occupies residues 894–1342 (LSPIQKLHFM…TLSDFPMLSL (449 aa)). A condensation 1 region spans residues 1373–1775 (SRMQQGILLS…FLQSLENIIH (403 aa)). Residues 1725 to 2333 (HDPAEFPVYV…TGLLDRWFLR (609 aa)) form an adenylation 2 region. The interval 2364–2386 (KPSPSQLLPSSTSATHRSSGTST) is disordered. Residues 2367–2376 (PSQLLPSSTS) are compositionally biased toward low complexity. Positions 2377–2386 (ATHRSSGTST) are enriched in polar residues. A condensation 2 region spans residues 2597–2670 (WRKYLADVES…TGSEEVCYGY (74 aa)). The tract at residues 2845-3368 (RCAHEIIEQQ…SGKLDRKKLR (524 aa)) is adenylation 3. The Carrier 2 domain maps to 3392–3468 (ASDEGVEGTL…NMAKRCGMLQ (77 aa)). S3429 carries the post-translational modification O-(pantetheine 4'-phosphoryl)serine. The segment at 3512–3898 (CSPVQEGLLT…GQFSFVLEQL (387 aa)) is condensation 3. The interval 3919–4454 (DSKEVALWNK…VSGKLDRKKI (536 aa)) is adenylation 4. A Carrier 3 domain is found at 4487–4563 (EDKSTAAKIL…ELIQAAEVET (77 aa)). S4524 is modified (O-(pantetheine 4'-phosphoryl)serine). An epimerase 2 region spans residues 4578 to 5024 (LSPIQNLYFK…DFPLLPITYD (447 aa)). The segment at 5052-5466 (SSVQEGILLS…PSQLVSELDL (415 aa)) is condensation 4. The region spanning 5552–5628 (SKLMEPEKRL…DMLAAISASN (77 aa)) is the Carrier 4 domain. S5589 is modified (O-(pantetheine 4'-phosphoryl)serine). Residues 5628–5658 (NSSSALEPDSPADSNNEKPAEPPRLVELERN) are disordered. Over residues 5642-5657 (NNEKPAEPPRLVELER) the composition is skewed to basic and acidic residues. Positions 5720–6067 (FFFDGRGSLD…SSSDGKLGVS (348 aa)) are condensation 5. One can recognise a Carrier 5 domain in the interval 6139 to 6220 (SDILVHSDVV…GQMAVLTLHN (82 aa)).

The protein belongs to the NRP synthetase family. Post-translationally, the thiolation domains are 4'-phosphopantetheinylated.

Functionally, nonribosomal peptide synthesis (NRPS) is a key mechanism responsible for the biosynthesis of bioactive metabolites which are potentially contributing to organismal virulence. Contributes to improved fungal tolerance against oxidative stress, during the infection process. The chain is Nonribosomal peptide synthetase 1 (NRPS1) from Aspergillus fumigatus (strain ATCC MYA-4609 / CBS 101355 / FGSC A1100 / Af293) (Neosartorya fumigata).